The chain runs to 394 residues: 1-deoxy-D-xylulose 5-phosphate reductoisomerase (394 aa).

Residues T12, G13, S14, I15, G38, N41, and N132 each coordinate NADPH. K133 is a binding site for 1-deoxy-D-xylulose 5-phosphate. E134 is a binding site for NADPH. Residue D156 coordinates Mn(2+). 4 residues coordinate 1-deoxy-D-xylulose 5-phosphate: S157, E158, S182, and H205. E158 is a binding site for Mn(2+). An NADPH-binding site is contributed by G211. Residues S218, N223, K224, and E227 each coordinate 1-deoxy-D-xylulose 5-phosphate. E227 is a Mn(2+) binding site.

Belongs to the DXR family. Mg(2+) serves as cofactor. Requires Mn(2+) as cofactor.

The catalysed reaction is 2-C-methyl-D-erythritol 4-phosphate + NADP(+) = 1-deoxy-D-xylulose 5-phosphate + NADPH + H(+). It functions in the pathway isoprenoid biosynthesis; isopentenyl diphosphate biosynthesis via DXP pathway; isopentenyl diphosphate from 1-deoxy-D-xylulose 5-phosphate: step 1/6. Catalyzes the NADPH-dependent rearrangement and reduction of 1-deoxy-D-xylulose-5-phosphate (DXP) to 2-C-methyl-D-erythritol 4-phosphate (MEP). This is 1-deoxy-D-xylulose 5-phosphate reductoisomerase from Pseudarthrobacter chlorophenolicus (strain ATCC 700700 / DSM 12829 / CIP 107037 / JCM 12360 / KCTC 9906 / NCIMB 13794 / A6) (Arthrobacter chlorophenolicus).